The chain runs to 189 residues: dCTP deaminase (189 aa).

DCTP-binding positions include 112-117 (KSTYAR), 136-138 (TLE), Gln-157, Tyr-171, and Gln-181. Glu-138 acts as the Proton donor/acceptor in catalysis.

This sequence belongs to the dCTP deaminase family. As to quaternary structure, homotrimer.

It catalyses the reaction dCTP + H2O + H(+) = dUTP + NH4(+). It functions in the pathway pyrimidine metabolism; dUMP biosynthesis; dUMP from dCTP (dUTP route): step 1/2. Catalyzes the deamination of dCTP to dUTP. The protein is dCTP deaminase of Halorhodospira halophila (strain DSM 244 / SL1) (Ectothiorhodospira halophila (strain DSM 244 / SL1)).